Reading from the N-terminus, the 226-residue chain is Ribonuclease HII (226 aa).

In terms of domain architecture, RNase H type-2 spans 29-220 (GPVAGVDEAG…VVAAGVRLEQ (192 aa)). A divalent metal cation is bound by residues D35, E36, and D129.

It belongs to the RNase HII family. Mn(2+) is required as a cofactor. Requires Mg(2+) as cofactor.

The protein resides in the cytoplasm. It catalyses the reaction Endonucleolytic cleavage to 5'-phosphomonoester.. In terms of biological role, endonuclease that specifically degrades the RNA of RNA-DNA hybrids. The sequence is that of Ribonuclease HII from Rhodococcus erythropolis (strain PR4 / NBRC 100887).